The following is a 518-amino-acid chain: Zinc finger protein 449 (518 aa).

In terms of domain architecture, SCAN box spans 30 to 112 (RQRFRQFQYR…SLIEDLQREL (83 aa)). Residues 292–304 (NPTLGETPENSNL) show a composition bias toward polar residues. Residues 292 to 325 (NPTLGETPENSNLEEPLNPKPHKKKSPGEKPHRC) form a disordered region. C2H2-type zinc fingers lie at residues 323–345 (HRCP…QRIH), 351–373 (HKCP…QRLH), 379–401 (YECT…QRTH), 407–429 (YKCL…LKTH), 435–457 (HRCH…QRTH), 463–485 (FKCN…LRIH), and 491–513 (YKCT…QVTH).

This sequence belongs to the krueppel C2H2-type zinc-finger protein family.

The protein resides in the nucleus. May be involved in transcriptional regulation. This is Zinc finger protein 449 (ZNF449) from Pan troglodytes (Chimpanzee).